The primary structure comprises 227 residues: ATP synthase F(0) complex subunit a (227 aa).

6 helical membrane passes run 12-32, 69-89, 98-118, 139-159, 170-190, and 196-216; these read PYLMGMPLILPSLLLPTLLFP, WALLLTSLILLLLSINLMGLL, QLSMNMALAFPLWLATLLIGL, IPILIMIETTSLLIRPLALGV, LLIQLISTATIALLPTMPSIS, and ILLLLTILEVAVAMIQAYVFV.

The protein belongs to the ATPase A chain family. In terms of assembly, component of the ATP synthase complex composed at least of ATP5F1A/subunit alpha, ATP5F1B/subunit beta, ATP5MC1/subunit c (homooctomer), MT-ATP6/subunit a, MT-ATP8/subunit 8, ATP5ME/subunit e, ATP5MF/subunit f, ATP5MG/subunit g, ATP5MK/subunit k, ATP5MJ/subunit j, ATP5F1C/subunit gamma, ATP5F1D/subunit delta, ATP5F1E/subunit epsilon, ATP5PF/subunit F6, ATP5PB/subunit b, ATP5PD/subunit d, ATP5PO/subunit OSCP. ATP synthase complex consists of a soluble F(1) head domain (subunits alpha(3) and beta(3)) - the catalytic core - and a membrane F(0) domain - the membrane proton channel (subunits c, a, 8, e, f, g, k and j). These two domains are linked by a central stalk (subunits gamma, delta, and epsilon) rotating inside the F1 region and a stationary peripheral stalk (subunits F6, b, d, and OSCP). Interacts with DNAJC30; interaction is direct.

It localises to the mitochondrion inner membrane. The enzyme catalyses H(+)(in) = H(+)(out). In terms of biological role, subunit a, of the mitochondrial membrane ATP synthase complex (F(1)F(0) ATP synthase or Complex V) that produces ATP from ADP in the presence of a proton gradient across the membrane which is generated by electron transport complexes of the respiratory chain. ATP synthase complex consist of a soluble F(1) head domain - the catalytic core - and a membrane F(1) domain - the membrane proton channel. These two domains are linked by a central stalk rotating inside the F(1) region and a stationary peripheral stalk. During catalysis, ATP synthesis in the catalytic domain of F(1) is coupled via a rotary mechanism of the central stalk subunits to proton translocation. With the subunit c (ATP5MC1), forms the proton-conducting channel in the F(0) domain, that contains two crucial half-channels (inlet and outlet) that facilitate proton movement from the mitochondrial intermembrane space (IMS) into the matrix. Protons are taken up via the inlet half-channel and released through the outlet half-channel, following a Grotthuss mechanism. The polypeptide is ATP synthase F(0) complex subunit a (Coturnix japonica (Japanese quail)).